A 338-amino-acid polypeptide reads, in one-letter code: Lipoate-protein ligase A (338 aa).

Positions 29-216 (PATQRVLFLW…AFFAHYGERV (188 aa)) constitute a BPL/LPL catalytic domain. ATP-binding positions include arginine 71, 76–79 (GAVF), and lysine 134. Lysine 134 contacts (R)-lipoate.

The protein belongs to the LplA family. As to quaternary structure, monomer.

The protein resides in the cytoplasm. It carries out the reaction L-lysyl-[lipoyl-carrier protein] + (R)-lipoate + ATP = N(6)-[(R)-lipoyl]-L-lysyl-[lipoyl-carrier protein] + AMP + diphosphate + H(+). It functions in the pathway protein modification; protein lipoylation via exogenous pathway; protein N(6)-(lipoyl)lysine from lipoate: step 1/2. It participates in protein modification; protein lipoylation via exogenous pathway; protein N(6)-(lipoyl)lysine from lipoate: step 2/2. Catalyzes both the ATP-dependent activation of exogenously supplied lipoate to lipoyl-AMP and the transfer of the activated lipoyl onto the lipoyl domains of lipoate-dependent enzymes. The protein is Lipoate-protein ligase A of Salmonella typhimurium (strain LT2 / SGSC1412 / ATCC 700720).